Consider the following 210-residue polypeptide: T-cell surface glycoprotein CD8 beta-2 chain (210 aa).

Residues 1–18 (MRPRLWLLLAAQLTVLHG) form the signal peptide. One can recognise an Ig-like V-type domain in the interval 19–132 (NSVLQQTPAY…ELTFGKGTQL (114 aa)). Over 19-170 (NSVLQQTPAY…ETQKGPLCSP (152 aa)) the chain is Extracellular. C41 and C116 are oxidised to a cystine. N102 carries an N-linked (GlcNAc...) asparagine glycan. The chain crosses the membrane as a helical span at residues 171–191 (VTLGLLVAGVLVLLVSLGVAM). At 192 to 210 (HLCCRRRRARLRFMKQFYK) the chain is on the cytoplasmic side.

In terms of assembly, in general heterodimer of an alpha and a beta chain linked by two disulfide bonds.

The protein resides in the cell membrane. Its function is as follows. Identifies cytotoxic/suppressor T-cells that interact with MHC class I bearing targets. CD8 is thought to play a role in the process of T-cell mediated killing. This is T-cell surface glycoprotein CD8 beta-2 chain from Homo sapiens (Human).